The primary structure comprises 925 residues: Glutamate receptor 3.1 (925 aa).

The signal sequence occupies residues 1-25; it reads MLSSMNWVLLSFIIVLGGGLLLSEG. At 26–591 the chain is on the extracellular side; it reads ASSSRPPVIK…NPWAFLRPFT (566 aa). Asn309, Asn341, Asn359, Asn419, Asn437, and Asn488 each carry an N-linked (GlcNAc...) asparagine glycan. The chain crosses the membrane as a helical span at residues 592-612; the sequence is LPMWAVTASFFVIVGAAIWIL. The Cytoplasmic segment spans residues 613–621; it reads EHRINDEFR. The helical transmembrane segment at 622-642 threads the bilayer; it reads GPPRRQIITILWFTFSTMFFS. Over 643–653 the chain is Cytoplasmic; the sequence is HRETTVSTLGR. The helical transmembrane segment at 654-674 threads the bilayer; that stretch reads MVLLIWLFVVLIITSSYTASL. Over 675-831 the chain is Extracellular; sequence TSILTVQQLN…GDSEQLNVHS (157 aa). Residues Asn738 and Asn812 are each glycosylated (N-linked (GlcNAc...) asparagine). A helical transmembrane segment spans residues 832–852; sequence FWGMFLVVGIACLVALFIHFF. The Cytoplasmic portion of the chain corresponds to 853–925; that stretch reads KIIRDFCKDT…ISRTASRRPI (73 aa). Positions 897–925 are disordered; it reads KRRLKRKRNNDHSMNANSIISRTASRRPI. Polar residues predominate over residues 908 to 919; it reads HSMNANSIISRT.

It belongs to the glutamate-gated ion channel (TC 1.A.10.1) family. As to quaternary structure, may form heteromers. In terms of tissue distribution, expressed predominantly in roots. Firt detected in the vascular tissues of the cotyledons, and later in the vasculature of all organs. In leaves, preferentially expressed in guard cells.

It localises to the membrane. Functionally, glutamate-gated receptor that probably acts as a non-selective cation channel. May be involved in light-signal transduction and calcium homeostasis via the regulation of calcium influx into cells. Required for the long-term calcium oscillation-regulated stomatal movements. The chain is Glutamate receptor 3.1 (GLR3.1) from Arabidopsis thaliana (Mouse-ear cress).